The chain runs to 336 residues: MSKINLLLLCGGGSAEHDISLLSANYFETSLAKSEQVNVLRVVLDKFGQYQTAAGDDCELTNNREIRFRDETKAPWPVDYVIPCIHGYPGETGDIQSYFNLIQLPYFGCESEASSNCFNKITAKMWFSALGIPNTPYIFLNQYDDEAIAQTQAALENWGSIFVKAASQGSSVGCYKVDDSSKVAGVLKDAFGYAPYVIVEKTIKARELEVAVYEYQGEVVATLPGEIICDSNTFYTFDEKYAKSSKARTDVVAQNVPADISDQIRAYAIKAFKGMKLRHLSRIDFFLTQDNEILLNEINTFPGSTPISMFPKMLQNHGHDFTEYLSLVIKGQLAAK.

Residues 124–330 (KMWFSALGIP…FTEYLSLVIK (207 aa)) enclose the ATP-grasp domain. ATP is bound at residue 154–209 (ALENWGSIFVKAASQGSSVGCYKVDDSSKVAGVLKDAFGYAPYVIVEKTIKARELE). 3 residues coordinate Mg(2+): D284, E297, and N299.

The protein belongs to the D-alanine--D-alanine ligase family. The cofactor is Mg(2+). Mn(2+) serves as cofactor.

It localises to the cytoplasm. The enzyme catalyses 2 D-alanine + ATP = D-alanyl-D-alanine + ADP + phosphate + H(+). The protein operates within cell wall biogenesis; peptidoglycan biosynthesis. Its function is as follows. Cell wall formation. This Shewanella sp. (strain MR-7) protein is D-alanine--D-alanine ligase.